A 1104-amino-acid chain; its full sequence is Nitrite reductase [NAD(P)H] (1104 aa).

44–79 provides a ligand contact to FAD; the sequence is QKIVVVGLGMVAVAFIEKLVKLDSERRKYDIVVIGE. Position 146 to 176 (146 to 176) interacts with NAD(+); it reads YDILVLATGSDAVLPTSTPGHDAKGIFVYRT. A disordered region spans residues 396–419; that stretch reads KFLPGQRPSAESIGAADPNREEEP. Residues cysteine 500, cysteine 502, cysteine 535, and cysteine 538 each coordinate [2Fe-2S] cluster. Residues cysteine 720, cysteine 726, cysteine 760, and cysteine 764 each contribute to the [4Fe-4S] cluster site. Position 764 (cysteine 764) interacts with siroheme. Residues 932-1040 form the Rieske domain; sequence WQPVIKADYF…VEEREDGWIY (109 aa). [2Fe-2S] cluster-binding residues include cysteine 976, histidine 978, cysteine 1001, and histidine 1004. Residues 1081–1104 form a disordered region; sequence GKRAGAKGIEGSKPTRSPSNTIDW. Residues 1094–1104 are compositionally biased toward polar residues; that stretch reads PTRSPSNTIDW.

Belongs to the nitrite and sulfite reductase 4Fe-4S domain family. In terms of assembly, homodimer. Requires siroheme as cofactor. It depends on [4Fe-4S] cluster as a cofactor. The cofactor is FAD. [2Fe-2S] cluster is required as a cofactor.

It catalyses the reaction NH4(+) + 3 NADP(+) + 2 H2O = nitrite + 3 NADPH + 5 H(+). The enzyme catalyses NH4(+) + 3 NAD(+) + 2 H2O = nitrite + 3 NADH + 5 H(+). The protein operates within nitrogen metabolism; nitrate reduction (assimilation). This chain is Nitrite reductase [NAD(P)H] (niiA), found in Emericella nidulans (strain FGSC A4 / ATCC 38163 / CBS 112.46 / NRRL 194 / M139) (Aspergillus nidulans).